We begin with the raw amino-acid sequence, 209 residues long: Redox-sensing transcriptional repressor Rex (209 aa).

The segment at residues 16–55 (VYIQVLTGLKRDGVEVISSEKLARACSVNPSQIRKDLAYF) is a DNA-binding region (H-T-H motif). 90-95 (GVGNLG) serves as a coordination point for NAD(+).

The protein belongs to the transcriptional regulatory Rex family. As to quaternary structure, homodimer.

The protein resides in the cytoplasm. Functionally, modulates transcription in response to changes in cellular NADH/NAD(+) redox state. This is Redox-sensing transcriptional repressor Rex from Maridesulfovibrio salexigens (strain ATCC 14822 / DSM 2638 / NCIMB 8403 / VKM B-1763) (Desulfovibrio salexigens).